Here is a 508-residue protein sequence, read N- to C-terminus: Purine-cytosine permease fcyB (508 aa).

The Cytoplasmic segment spans residues 1 to 72 (MAGAFDFDLE…AEQTDTSVFN (72 aa)). Residues 73–93 (IGSMWLAANMVVSSFAIGVLG) traverse the membrane as a helical segment. At 94–104 (KSVYSLGFVDA) the chain is on the extracellular side. The chain crosses the membrane as a helical span at residues 105 to 125 (ILTVLFFNLLGIMTVCFFSCF). Topologically, residues 126–147 (GPFGLRQMVFSRLWFGWYVTKG) are cytoplasmic. The chain crosses the membrane as a helical span at residues 148-168 (FAVLNILACLGWSAANAIVGA). Residues 169–177 (QMLHAVNSD) lie on the Extracellular side of the membrane. A helical transmembrane segment spans residues 178-198 (VPGFAAILIISICTLLVTFAG). The Cytoplasmic segment spans residues 199 to 200 (YK). Residues 201 to 221 (VVHLYEYWSWIPTFIVFMIIL) traverse the membrane as a helical segment. The Extracellular portion of the chain corresponds to 222 to 243 (GTFAHSGDFQNIPMGVGTSEMG). The chain crosses the membrane as a helical span at residues 244-264 (SVLSFGSAVYGFATGWTSYAA). The Cytoplasmic segment spans residues 265–278 (DYTVYQPANRSKRK). The chain crosses the membrane as a helical span at residues 279–299 (IFLSTWLGLIVPLLFVEMLGV). The Extracellular portion of the chain corresponds to 300 to 323 (AVMTATDIKGSKYDVGYATSGNGG). The helical transmembrane segment at 324–344 (LIAAVLQPLGGFGDFCLVILA) threads the bilayer. The Cytoplasmic segment spans residues 345–374 (LSIVANNCPNFYSVALTVQVLSRYAQRVPR). Residues 375-395 (FIWTLFGTGVSIAIAIPGYSH) traverse the membrane as a helical segment. The Extracellular portion of the chain corresponds to 396-404 (FETVLENFM). The chain crosses the membrane as a helical span at residues 405-425 (NFIAYWLAIYSAIAIMDHFVF). The Cytoplasmic portion of the chain corresponds to 426–442 (KRGFSGYVVENFDKREK). Residues 443–463 (LPVGIAATIAFGFGVAGMITG) traverse the membrane as a helical segment. The Extracellular segment spans residues 464–477 (MSQPWYVGPIARHA). The helical transmembrane segment at 478–498 (AGGDVGFELGFAFAAFSYLCL) threads the bilayer. The Cytoplasmic segment spans residues 499 to 508 (RPFEIKFFGR).

Belongs to the purine-cytosine permease (2.A.39) family.

Its subcellular location is the cell membrane. In terms of biological role, this permease has a broad specificity towards purines, and also transports cytosine, but neither uracil nor thymine. Contributes very little in purine uptake. Its major role may be the uptake of cytosine. This chain is Purine-cytosine permease fcyB (fcyB), found in Emericella nidulans (strain FGSC A4 / ATCC 38163 / CBS 112.46 / NRRL 194 / M139) (Aspergillus nidulans).